The chain runs to 373 residues: Lipoyl synthase, mitochondrial (373 aa).

A mitochondrion-targeting transit peptide spans 1–26 (MALRCWDAARSLGSRIFGRYACSVRA). [4Fe-4S] cluster contacts are provided by Cys-105, Cys-110, Cys-116, Cys-136, Cys-140, Cys-143, and Ser-351. The Radical SAM core domain maps to 121-340 (EYATATATIM…EEVGNELGFH (220 aa)).

Belongs to the radical SAM superfamily. Lipoyl synthase family. The cofactor is [4Fe-4S] cluster.

The protein resides in the mitochondrion. The enzyme catalyses [[Fe-S] cluster scaffold protein carrying a second [4Fe-4S](2+) cluster] + N(6)-octanoyl-L-lysyl-[protein] + 2 oxidized [2Fe-2S]-[ferredoxin] + 2 S-adenosyl-L-methionine + 4 H(+) = [[Fe-S] cluster scaffold protein] + N(6)-[(R)-dihydrolipoyl]-L-lysyl-[protein] + 4 Fe(3+) + 2 hydrogen sulfide + 2 5'-deoxyadenosine + 2 L-methionine + 2 reduced [2Fe-2S]-[ferredoxin]. It participates in protein modification; protein lipoylation via endogenous pathway; protein N(6)-(lipoyl)lysine from octanoyl-[acyl-carrier-protein]: step 2/2. Its function is as follows. Catalyzes the radical-mediated insertion of two sulfur atoms into the C-6 and C-8 positions of the octanoyl moiety bound to the lipoyl domains of lipoate-dependent enzymes, thereby converting the octanoylated domains into lipoylated derivatives. The sequence is that of Lipoyl synthase, mitochondrial (Lias) from Rattus norvegicus (Rat).